The primary structure comprises 288 residues: MSDSGEQNYGERESRSASRSGSAHGSGKSARHTPARSRSKEDSRRSRSKSRSRSESRSRSRRSSRRHYTRSRSRSRSHRRSRSRSYSRDYRRRHSHSHSPMSTRRRHVGNRANPDPNCCLGVFGLSLYTTERDLREVFSKYGPIADVSIVYDQQSRRSRGFAFVYFENVDDAKEAKERANGMELDGRRIRVDFSITKRPHTPTPGIYMGRPTYGSSRRRDYYDRGYDRGYDDRDYYSRSYRGGGGGGGGWRAAQDRDQIYRRRSPSPYYSRGGYRSRSRSRSYSPRRY.

Disordered stretches follow at residues 1–114 and 196–225; these read MSDS…RANP and TKRP…YDRG. An N-acetylserine modification is found at serine 2. 3 positions are modified to phosphoserine: serine 2, serine 4, and serine 14. A compositionally biased stretch (low complexity) spans 17–28; sequence ASRSGSAHGSGK. A Phosphoserine modification is found at serine 29. The residue at position 33 (threonine 33) is a Phosphothreonine. A compositionally biased stretch (basic residues) spans 59-109; that stretch reads RSRRSSRRHYTRSRSRSRSHRRSRSRSYSRDYRRRHSHSHSPMSTRRRHVG. A phosphoserine mark is found at serine 83, serine 85, serine 87, serine 95, serine 97, and serine 99. Threonine 103 bears the Phosphothreonine mark. An RRM domain is found at 118–196; sequence CCLGVFGLSL…RRIRVDFSIT (79 aa). The tract at residues 193-230 is linker; the sequence is FSITKRPHTPTPGIYMGRPTYGSSRRRDYYDRGYDRGY. Residue lysine 197 forms a Glycyl lysine isopeptide (Lys-Gly) (interchain with G-Cter in SUMO2) linkage. Residues threonine 201 and threonine 203 each carry the phosphothreonine modification. Phosphoserine is present on residues serine 215 and serine 237. At arginine 241 the chain carries Asymmetric dimethylarginine; alternate. The residue at position 241 (arginine 241) is a Dimethylated arginine; alternate. Arginine 241 is modified (omega-N-methylarginine; alternate). The disordered stretch occupies residues 242 to 288; the sequence is GGGGGGGGWRAAQDRDQIYRRRSPSPYYSRGGYRSRSRSRSYSPRRY. Over residues 274-288 the composition is skewed to basic residues; that stretch reads YRSRSRSRSYSPRRY.

The protein belongs to the splicing factor SR family. As to quaternary structure, found in a pre-mRNA exonic splicing enhancer (ESE) complex with TRA2B/SFRS10, SNRNP70, SNRPA1 and SRRM1. Binds to A3 enhancer proteins SFRS4, SFRS5, SFRS6 and SFRS9. Interacts with CPSF6, RBMY1A1, RBMX, RNPS1 and phosphorylated SFRS13A. Interacts with SAFB/SAFB1. Interacts with ILDR1 (via C-terminus) and ILDR2. Phosphorylated in the RS domains.

The protein resides in the nucleus. In terms of biological role, sequence-specific RNA-binding protein which participates in the control of pre-mRNA splicing. Can either activate or suppress exon inclusion. Acts additively with RBMX to promote exon 7 inclusion of the survival motor neuron SMN2. Activates the splicing of MAPT/Tau exon 10. Alters pre-mRNA splicing patterns by antagonizing the effects of splicing regulators, like RBMX. Binds to the AG-rich SE2 domain in the SMN exon 7 RNA. Binds to pre-mRNA. This is Transformer-2 protein homolog beta (TRA2B) from Bos taurus (Bovine).